The following is a 503-amino-acid chain: MNILLMQRIVSFILVVSQGRYFHVGELTMTMLKRPQEEESDNNATKKLKTRLTYPCILGKDKVTGKFIFPAITKDDVMNARLFLKDNDLKTFLEYFLPVEVNSIYIYFMIKLLGFDVKDKELFMALNSNITSNKERSSAELSSIHAKAEDEDELTDPLEKKHAVKLIKDLQKAINKVLSTRLRLPNFNTIDHFTATLRNAKKILVLTGAGVSTSLGIPDFRSSEGFYSKIRHLGLEDPQDVFNLDIFLQDPSVFYNIAHMVLPPENMYSPLHSFIKMLQDKGKLLRNYTQNIDNLESYAGIDPDKLVQCHGSFATASCVTCHWQIPGEKIFENIRNLELPLCPYCYQKRKQYFPMSNGNNTVQTNINFNSPILKSYGVLKPDMTFFGEALPSRFHKTIRKDILECDLLICIGTSLKVAPVSEIVNMVPSHVPQILINRDMVTHAEFDLNLLGFCDDVASLVAKKCHWDIPHKKWQDLKKIDYNCTEIDKGTYKIKKQPRKKQQ.

One can recognise a Deacetylase sirtuin-type domain in the interval 183-468 (RLPNFNTIDH…SLVAKKCHWD (286 aa)). NAD(+)-binding positions include 208–227 (GAGV…EGFY) and 290–293 (QNID). Catalysis depends on His310, which acts as the Proton acceptor. The Zn(2+) site is built by Cys318, Cys321, Cys342, and Cys345. NAD(+) is bound by residues 412–414 (GTS), 437–439 (NRD), and Cys454.

This sequence belongs to the sirtuin family. Class I subfamily. In terms of assembly, identified in the Set3C complex with HOS2, SIF2, SNT1, CPR1, HOS4/YIL112W and SET3. Its presence is however not essential for meiotic repression by the Set3C complex. Interacts with SUM1 and RFM1. The interaction with SUM1 is mediated by RFM1. It depends on Zn(2+) as a cofactor.

The protein resides in the nucleus. The catalysed reaction is N(6)-acetyl-L-lysyl-[protein] + NAD(+) + H2O = 2''-O-acetyl-ADP-D-ribose + nicotinamide + L-lysyl-[protein]. Its function is as follows. NAD-dependent histone deacetylase involved in telomeric silencing. Histone deacetylase proteins act via the formation of large multiprotein complexes that are responsible for the deacetylation of lysine residues on the N-terminal part of the core histones (H2A, H2B, H3 and H4). Histone deacetylation gives a tag for epigenetic repression and plays an important role in transcriptional regulation, cell cycle progression and developmental events. Restores silencing at HMR in SIR2 mutants when overexpressed. Required to repress middle sporulation genes during vegetative growth. Acts as a sensor of NAD(+) levels and regulator of NAD(+) biosynthesis. Regulates the gene expression of de novo NAD(+) biosynthesis genes. In Saccharomyces cerevisiae (strain ATCC 204508 / S288c) (Baker's yeast), this protein is NAD-dependent protein deacetylase HST1 (HST1).